The primary structure comprises 110 residues: Phosphoribosyl-ATP pyrophosphatase (110 aa).

It belongs to the PRA-PH family.

It localises to the cytoplasm. It catalyses the reaction 1-(5-phospho-beta-D-ribosyl)-ATP + H2O = 1-(5-phospho-beta-D-ribosyl)-5'-AMP + diphosphate + H(+). It participates in amino-acid biosynthesis; L-histidine biosynthesis; L-histidine from 5-phospho-alpha-D-ribose 1-diphosphate: step 2/9. The sequence is that of Phosphoribosyl-ATP pyrophosphatase from Lacticaseibacillus casei (strain BL23) (Lactobacillus casei).